A 700-amino-acid polypeptide reads, in one-letter code: Methionine--tRNA ligase (700 aa).

The 'HIGH' region motif lies at 12–22 (PYANGNFHIGH). Residues C143, C146, C156, and C159 each contribute to the Zn(2+) site. Positions 348–352 (KMSKS) match the 'KMSKS' region motif. K351 contacts ATP. The region spanning 594–700 (DFSKIDLRIA…AGAQPGMRVH (107 aa)) is the tRNA-binding domain.

Belongs to the class-I aminoacyl-tRNA synthetase family. MetG type 1 subfamily. As to quaternary structure, homodimer. It depends on Zn(2+) as a cofactor.

Its subcellular location is the cytoplasm. The enzyme catalyses tRNA(Met) + L-methionine + ATP = L-methionyl-tRNA(Met) + AMP + diphosphate. Its function is as follows. Is required not only for elongation of protein synthesis but also for the initiation of all mRNA translation through initiator tRNA(fMet) aminoacylation. The polypeptide is Methionine--tRNA ligase (Albidiferax ferrireducens (strain ATCC BAA-621 / DSM 15236 / T118) (Rhodoferax ferrireducens)).